Consider the following 366-residue polypeptide: Homer protein homolog 1 (366 aa).

A WH1 domain is found at 1 to 110 (MGEQPIFSTR…EKFQEFKEAA (110 aa)). Gly-2 carries the post-translational modification N-acetylglycine. Residues 114–189 (KEKSQEKMEL…RTQGLSHASS (76 aa)) form a disordered region. Polar residues predominate over residues 138 to 147 (SPLTPESING). A coiled-coil region spans residues 193–364 (KHWEAELATL…LRDNLAKLLE (172 aa)). A required for tetramerization region spans residues 302-366 (KLQEVEIRNK…DNLAKLLECS (65 aa)). A Phosphoserine modification is found at Ser-318.

It belongs to the Homer family. In terms of assembly, tetramer; this tetrameric structure is critical for forming the high-order complex with SHANK1, which in turn is necessary for the structural and functional integrity of dendritic spines. Interacts with GRM1, GRM5, ITPR1, DYN3, RYR1, RYR2 and SHANK3. Interacts with IFT57 and OPHN1. Isoform 1 and isoform 2 encode coiled-coil structures that mediate homo- and heteromultimerization. Interacts with SHANK1; forms high-order polymerized complex with a mesh-like network structure, at least composed of SHANK1, HOMER1 and DLGAP1; the complex formation is SHANK1 multimerization dependent. Interacts with NFATC4. Interacts with DAGLA (via PPXXF motif); this interaction is required for the cell membrane localization of DAGLA. Interacts with SRGAP2. Highly expressed in cortex, Purkinje cells of the cerebellum, hippocampus, striatum and olfactory bulb. Isoform 1 and isoform 3 are expressed in skeletal and cardiac muscle.

It localises to the cytoplasm. The protein localises to the postsynaptic density. Its subcellular location is the synapse. The protein resides in the cell projection. It is found in the dendritic spine. In terms of biological role, postsynaptic density scaffolding protein. Binds and cross-links cytoplasmic regions of GRM1, GRM5, ITPR1, DNM3, RYR1, RYR2, SHANK1 and SHANK3. By physically linking GRM1 and GRM5 with ER-associated ITPR1 receptors, it aids the coupling of surface receptors to intracellular calcium release. May also couple GRM1 to PI3 kinase through its interaction with AGAP2. Differentially regulates the functions of the calcium activated channel ryanodine receptors RYR1 and RYR2. Isoform 1 decreases the activity of RYR2, and increases the activity of RYR1, whereas isoform 3 counteracts the effects by competing for binding sites. Isoform 1 regulates the trafficking and surface expression of GRM5. Isoform 3 acts as a natural dominant negative, in dynamic competition with constitutively expressed isoform 1, and isoform 2 to regulate synaptic metabotropic glutamate function. Isoform 3, may be involved in the structural changes that occur at synapses during long-lasting neuronal plasticity and development. Forms a high-order complex with SHANK1, which in turn is necessary for the structural and functional integrity of dendritic spines. Negatively regulates T cell activation by inhibiting the calcineurin-NFAT pathway. Acts by competing with calcineurin/PPP3CA for NFAT protein binding, hence preventing NFAT activation by PPP3CA. The protein is Homer protein homolog 1 of Rattus norvegicus (Rat).